The chain runs to 160 residues: MVQFYLLTLVFIVVDRFAKLFAINVLRDLPNGIVLVPDWFKLMYAENLGIAFGLRLLPPEGILLLALAISAGLTWYVWISQNRSPLFILTFALILGGGLGNLIDRLIFGHVVDFIYFDIYQGTLFGKYVSLWPIFNIADACITIGACLLFFFHDKIFNPR.

A run of 2 helical transmembrane segments spans residues Pro-59–Ile-79 and Ser-84–Asp-104. Catalysis depends on residues Asp-113 and Asp-139. Residues Trp-132–Phe-152 traverse the membrane as a helical segment.

It belongs to the peptidase A8 family.

It is found in the cell inner membrane. The catalysed reaction is Release of signal peptides from bacterial membrane prolipoproteins. Hydrolyzes -Xaa-Yaa-Zaa-|-(S,diacylglyceryl)Cys-, in which Xaa is hydrophobic (preferably Leu), and Yaa (Ala or Ser) and Zaa (Gly or Ala) have small, neutral side chains.. It participates in protein modification; lipoprotein biosynthesis (signal peptide cleavage). Functionally, this protein specifically catalyzes the removal of signal peptides from prolipoproteins. The sequence is that of Lipoprotein signal peptidase from Chlorobaculum parvum (strain DSM 263 / NCIMB 8327) (Chlorobium vibrioforme subsp. thiosulfatophilum).